A 518-amino-acid chain; its full sequence is Zinc finger protein 449 (518 aa).

In terms of domain architecture, SCAN box spans R30–L112. The span at N292–L304 shows a compositional bias: polar residues. Positions N292 to C325 are disordered. C2H2-type zinc fingers lie at residues H323–H345, H351–H373, Y379–H401, Y407–H429, H435–H457, F463–H485, and Y491–H513.

It belongs to the krueppel C2H2-type zinc-finger protein family.

Its subcellular location is the nucleus. In terms of biological role, may be involved in transcriptional regulation. The sequence is that of Zinc finger protein 449 (ZNF449) from Gorilla gorilla gorilla (Western lowland gorilla).